The sequence spans 687 residues: Threonine--tRNA ligase (687 aa).

One can recognise a TGS domain in the interval 1–67; sequence MAHLIEAAPN…EQDSKFTPVP (67 aa). The interval 266–572 is catalytic; it reads DHRRLGAELD…LLEHYAGAFP (307 aa). Residues cysteine 371, histidine 422, and histidine 549 each contribute to the Zn(2+) site.

Belongs to the class-II aminoacyl-tRNA synthetase family. In terms of assembly, homodimer. Requires Zn(2+) as cofactor.

The protein resides in the cytoplasm. The catalysed reaction is tRNA(Thr) + L-threonine + ATP = L-threonyl-tRNA(Thr) + AMP + diphosphate + H(+). In terms of biological role, catalyzes the attachment of threonine to tRNA(Thr) in a two-step reaction: L-threonine is first activated by ATP to form Thr-AMP and then transferred to the acceptor end of tRNA(Thr). Also edits incorrectly charged L-seryl-tRNA(Thr). This Corynebacterium diphtheriae (strain ATCC 700971 / NCTC 13129 / Biotype gravis) protein is Threonine--tRNA ligase.